Here is a 100-residue protein sequence, read N- to C-terminus: Putative pterin-4-alpha-carbinolamine dehydratase (100 aa).

It belongs to the pterin-4-alpha-carbinolamine dehydratase family.

It carries out the reaction (4aS,6R)-4a-hydroxy-L-erythro-5,6,7,8-tetrahydrobiopterin = (6R)-L-erythro-6,7-dihydrobiopterin + H2O. In Rhodopseudomonas palustris (strain TIE-1), this protein is Putative pterin-4-alpha-carbinolamine dehydratase.